The following is a 292-amino-acid chain: Elongation factor Ts (292 aa).

An involved in Mg(2+) ion dislocation from EF-Tu region spans residues 79 to 82; it reads TDFV.

This sequence belongs to the EF-Ts family.

It is found in the cytoplasm. Its function is as follows. Associates with the EF-Tu.GDP complex and induces the exchange of GDP to GTP. It remains bound to the aminoacyl-tRNA.EF-Tu.GTP complex up to the GTP hydrolysis stage on the ribosome. The polypeptide is Elongation factor Ts (Xanthomonas oryzae pv. oryzae (strain MAFF 311018)).